The primary structure comprises 157 residues: Transcription elongation factor GreB (157 aa).

Belongs to the GreA/GreB family. GreB subfamily.

Its function is as follows. Necessary for efficient RNA polymerase transcription elongation past template-encoded arresting sites. The arresting sites in DNA have the property of trapping a certain fraction of elongating RNA polymerases that pass through, resulting in locked ternary complexes. Cleavage of the nascent transcript by cleavage factors such as GreA or GreB allows the resumption of elongation from the new 3'terminus. GreB releases sequences of up to 9 nucleotides in length. This Salmonella typhi protein is Transcription elongation factor GreB.